A 467-amino-acid chain; its full sequence is Probable protein phosphatase 2C 55 (467 aa).

The PPM-type phosphatase domain occupies 222 to 458 (SCYLPHPDKE…DDITVVVSYV (237 aa)). Mn(2+) contacts are provided by Asp252, Gly253, Asp383, and Asp449.

The protein belongs to the PP2C family. Requires Mg(2+) as cofactor. Mn(2+) is required as a cofactor.

It catalyses the reaction O-phospho-L-seryl-[protein] + H2O = L-seryl-[protein] + phosphate. It carries out the reaction O-phospho-L-threonyl-[protein] + H2O = L-threonyl-[protein] + phosphate. This Arabidopsis thaliana (Mouse-ear cress) protein is Probable protein phosphatase 2C 55.